A 563-amino-acid polypeptide reads, in one-letter code: Urocanate hydratase (563 aa).

NAD(+) is bound by residues 53 to 54 (GG), Gln131, 177 to 179 (GMG), Glu197, Arg202, 243 to 244 (NA), 264 to 268 (QTSAH), 274 to 275 (YL), and Tyr323. Cys411 is a catalytic residue. Gly493 contacts NAD(+).

Belongs to the urocanase family. NAD(+) serves as cofactor.

It is found in the cytoplasm. The catalysed reaction is 4-imidazolone-5-propanoate = trans-urocanate + H2O. The protein operates within amino-acid degradation; L-histidine degradation into L-glutamate; N-formimidoyl-L-glutamate from L-histidine: step 2/3. Catalyzes the conversion of urocanate to 4-imidazolone-5-propionate. The sequence is that of Urocanate hydratase from Yersinia pestis bv. Antiqua (strain Antiqua).